The sequence spans 231 residues: Ribosomal RNA small subunit methyltransferase G (231 aa).

Residues glycine 75, 125–126 (GE), and arginine 140 contribute to the S-adenosyl-L-methionine site. The segment covering 204–213 (AEAEEGDSPE) has biased composition (acidic residues). Residues 204–231 (AEAEEGDSPEAADASRGVILELTKKNKG) are disordered.

The protein belongs to the methyltransferase superfamily. RNA methyltransferase RsmG family.

It is found in the cytoplasm. In terms of biological role, specifically methylates the N7 position of a guanine in 16S rRNA. This Rhodopirellula baltica (strain DSM 10527 / NCIMB 13988 / SH1) protein is Ribosomal RNA small subunit methyltransferase G.